We begin with the raw amino-acid sequence, 101 residues long: MDKSKQLFRKSKRSFRRRLPPIGSGDRIDYRNMSLISRFISEQGKILSRRVNRLTLKQQRLITIAIKQARILSSLPFLNNEKQFERTESIPRPTGPRSRNK.

The segment covering 1–19 (MDKSKQLFRKSKRSFRRRL) has biased composition (basic residues). Residues 1 to 23 (MDKSKQLFRKSKRSFRRRLPPIG) are disordered.

This sequence belongs to the bacterial ribosomal protein bS18 family. As to quaternary structure, part of the 30S ribosomal subunit.

It is found in the plastid. The protein localises to the chloroplast. This Acorus calamus (Sweet flag) protein is Small ribosomal subunit protein bS18c.